The primary structure comprises 3183 residues: WD repeat- and FYVE domain-containing protein 4 (3183 aa).

The span at 1–15 (MEAEDLSKTEDRPED) shows a compositional bias: basic and acidic residues. Disordered stretches follow at residues 1–37 (MEAE…EGQS), 790–811 (AGQE…GKFK), 938–977 (KSLH…QALR), and 1828–1852 (KETT…HAAE). Residues 1832–1852 (SESSRNTSSPGASAEASHAAE) are compositionally biased toward low complexity. One can recognise a BEACH-type PH domain in the interval 2383–2508 (LDGEKVSQKV…DRSKALKSFS (126 aa)). The 295-residue stretch at 2525–2819 (NLRKHPGFDR…QIFTKPHPSR (295 aa)) folds into the BEACH domain. Residues 2812 to 2836 (FTKPHPSRNTTGKNPGPGKDASTPV) are disordered. WD repeat units lie at residues 2930–2969 (LAAW…GRPR), 2979–3018 (GHTQ…RVAC), 3021–3060 (VHRE…ASIT), 3070–3108 (TCCC…MPVP), and 3150–3183 (KASP…SADG).

Interacts with HSP90AB1. As to expression, highly expressed in immune tissues, especially B lymphocytes.

The protein localises to the early endosome. Its subcellular location is the endoplasmic reticulum. Functionally, plays a critical role in the regulation of cDC1-mediated cross-presentation of viral and tumor antigens in dendritic cells. Mechanistically, acts near the plasma membrane and interacts with endosomal membranes to promote endosomal-to-cytosol antigen trafficking. Also plays a role in B-cell survival through regulation of autophagy. This Mus musculus (Mouse) protein is WD repeat- and FYVE domain-containing protein 4.